The sequence spans 467 residues: Mitogen-activated protein kinase kinase kinase 8 (467 aa).

Threonine 80 bears the Phosphothreonine mark. Residues serine 138 and serine 141 each carry the phosphoserine modification. Residues 144 to 152 and lysine 167 contribute to the ATP site; that span reads VPRGAFGKV. The Protein kinase domain occupies 146–388; it reads RGAFGKVYLA…AADLLKHEAL (243 aa). Residue aspartate 253 is the Proton acceptor of the active site. Threonine 290 carries the post-translational modification Phosphothreonine. Phosphoserine occurs at positions 400 and 443.

It belongs to the protein kinase superfamily. STE Ser/Thr protein kinase family. MAP kinase kinase kinase subfamily. As to quaternary structure, forms a ternary complex with NFKB1/p105 and TNIP2. Interacts with NFKB1; the interaction increases the stability of MAP3K8 but inhibits its MEK phosphorylation activity, whereas loss of interaction following LPS stimulation leads to its degradation. Interacts with CD40 and TRAF6; the interaction is required for ERK activation. Interacts with KSR2; the interaction inhibits ERK and NF-kappa-B activation. It depends on Mg(2+) as a cofactor. Post-translationally, autophosphorylated. Expressed in spleen, thymus, liver and lung.

The protein localises to the cytoplasm. It carries out the reaction L-seryl-[protein] + ATP = O-phospho-L-seryl-[protein] + ADP + H(+). The catalysed reaction is L-threonyl-[protein] + ATP = O-phospho-L-threonyl-[protein] + ADP + H(+). Its function is as follows. Required for lipopolysaccharide (LPS)-induced, TLR4-mediated activation of the MAPK/ERK pathway in macrophages, thus being critical for production of the pro-inflammatory cytokine TNF-alpha (TNF) during immune responses. Involved in the regulation of T-helper cell differentiation and IFNG expression in T-cells. Involved in mediating host resistance to bacterial infection through negative regulation of type I interferon (IFN) production. Transduces CD40 and TNFRSF1A signals that activate ERK in B-cells and macrophages, and thus may play a role in the regulation of immunoglobulin production. May also play a role in the transduction of TNF signals that activate JNK and NF-kappa-B in some cell types. In adipocytes, activates MAPK/ERK pathway in an IKBKB-dependent manner in response to IL1B and TNF, but not insulin, leading to induction of lipolysis. Plays a role in the cell cycle. This chain is Mitogen-activated protein kinase kinase kinase 8 (Map3k8), found in Rattus norvegicus (Rat).